A 184-amino-acid polypeptide reads, in one-letter code: Glutathione-regulated potassium-efflux system ancillary protein KefG (184 aa).

This sequence belongs to the NAD(P)H dehydrogenase (quinone) family. KefG subfamily. In terms of assembly, interacts with KefB.

The protein localises to the cell inner membrane. It carries out the reaction a quinone + NADH + H(+) = a quinol + NAD(+). The enzyme catalyses a quinone + NADPH + H(+) = a quinol + NADP(+). Functionally, regulatory subunit of a potassium efflux system that confers protection against electrophiles. Required for full activity of KefB. The protein is Glutathione-regulated potassium-efflux system ancillary protein KefG of Yersinia enterocolitica serotype O:8 / biotype 1B (strain NCTC 13174 / 8081).